The sequence spans 369 residues: MQVDPTKGIGLANTSLQFSNGRLHALCEYDLPYVVRLSPEDGDISTVGRIENNVSTKSTTAHPKTDPVTGETFSFSYGPIQPYVTYSRYDCDGKKSGPDVPIFSFKEPSFVHDFAITEHYAVFPDIQIVMKPAEIVRGRRMIGPDLEKVPRLGLLPRYATSDSEMRWFDVPGFNMVHVVNAWEEEGGEVVVIVAPNVSPIENAIDRFDLLHVSVEMARIELKSGSVSRTLLSAENLDFGVIHRGYSGRKSRYAYLGVGDPMPKIRGVVKVDFELAGRGECVVARREFGVGCFGGEPFFVPASSKKSGGEEDDGYVVSYLHDEGKGESSFVVMDARSPELEILAEVVLPRRVPYGFHGLFVTEAELLSQQ.

The Fe cation site is built by His62, His112, His177, and His356.

This sequence belongs to the carotenoid oxygenase family. Fe(2+) serves as cofactor. In terms of tissue distribution, in the style branches.

Its subcellular location is the plastid. It is found in the chromoplast. It catalyses the reaction all-trans-zeaxanthin + 2 O2 = crocetin dialdehyde + 2 3beta-hydroxy-beta-cyclocitral. Functionally, cleaves zeaxanthin symmetrically at the 7-8 and 7'-8' double bonds to produce crocetin dialdehyde and hydroxy-beta-cyclocitral, two water-soluble precursors sequestred in vacuoles and involved in the synthesis of saffron pigment and aroma. The protein is Zeaxanthin 7,8(7',8')-cleavage dioxygenase, chromoplastic (ZCD) of Crocus sativus (Saffron).